Consider the following 598-residue polypeptide: 4-coumarate--CoA ligase-like 6 (598 aa).

Ser232, Ser233, Gly234, Thr235, Thr236, and Lys240 together coordinate ATP. Arg318 serves as a coordination point for CoA. The tract at residues 320 to 389 is SBD1; sequence DLAAAARAVE…TVFPSVQIVQ (70 aa). (E)-4-coumaroyl-AMP-binding residues include Gly367, Gln389, and Thr394. Gln389, Thr394, Asp475, and Arg490 together coordinate ATP. The segment at 390–454 is SBD2; the sequence is SYGLTESTGP…IRGPVVMKGY (65 aa). Residues Lys492 and Lys496 each coordinate (E)-4-coumaroyl-AMP. The CoA site is built by Lys498 and Gly499. Lys581 provides a ligand contact to ATP.

Belongs to the ATP-dependent AMP-binding enzyme family. It depends on Mg(2+) as a cofactor.

The catalysed reaction is (E)-4-coumarate + ATP + CoA = (E)-4-coumaroyl-CoA + AMP + diphosphate. It carries out the reaction (E)-4-coumarate + ATP + H(+) = (E)-4-coumaroyl-AMP + diphosphate. The enzyme catalyses (E)-4-coumaroyl-AMP + CoA = (E)-4-coumaroyl-CoA + AMP + H(+). Its function is as follows. Carboxylate--CoA ligase that may use 4-coumarate as substrate. Follows a two-step reaction mechanism, wherein the carboxylate substrate first undergoes adenylation by ATP, followed by a thioesterification in the presence of CoA to yield the final CoA thioester. The polypeptide is 4-coumarate--CoA ligase-like 6 (4CLL6) (Oryza sativa subsp. japonica (Rice)).